Consider the following 64-residue polypeptide: Large ribosomal subunit protein bL32 (64 aa).

The interval 1–28 (MAVQKSRVTPSRRGQRRSHDALTAKKLS) is disordered.

It belongs to the bacterial ribosomal protein bL32 family.

The sequence is that of Large ribosomal subunit protein bL32 (rpmF) from Xylella fastidiosa (strain 9a5c).